The primary structure comprises 462 residues: L-seryl-tRNA(Sec) selenium transferase (462 aa).

Residue Lys295 is modified to N6-(pyridoxal phosphate)lysine.

This sequence belongs to the SelA family. As to quaternary structure, homodecamer; pentamer of dimers. Binds only one seryl-tRNA(Sec) per dimer. Pyridoxal 5'-phosphate is required as a cofactor.

The protein resides in the cytoplasm. The enzyme catalyses L-seryl-tRNA(Sec) + selenophosphate + H(+) = L-selenocysteinyl-tRNA(Sec) + phosphate. The protein operates within aminoacyl-tRNA biosynthesis; selenocysteinyl-tRNA(Sec) biosynthesis; selenocysteinyl-tRNA(Sec) from L-seryl-tRNA(Sec) (bacterial route): step 1/1. Converts seryl-tRNA(Sec) to selenocysteinyl-tRNA(Sec) required for selenoprotein biosynthesis. This is L-seryl-tRNA(Sec) selenium transferase from Klebsiella pneumoniae (strain 342).